The chain runs to 88 residues: MQAARFIFTGVVQGVFFRASTRERALALQLRGHARNQADGSVEVVAAGSAAALEALEHWLWQGSPASKVASVTRTPCAIPTTEAFVTG.

The region spanning 3–88 (AARFIFTGVV…IPTTEAFVTG (86 aa)) is the Acylphosphatase-like domain. Catalysis depends on residues arginine 18 and asparagine 36.

This sequence belongs to the acylphosphatase family.

It carries out the reaction an acyl phosphate + H2O = a carboxylate + phosphate + H(+). This Xanthomonas campestris pv. campestris (strain 8004) protein is Acylphosphatase (acyP).